Consider the following 100-residue polypeptide: Vesicle-associated membrane protein 8 (100 aa).

N-acetylmethionine is present on M1. Topologically, residues 1 to 75 (MEEASEGGGN…ARKFWWKNVK (75 aa)) are cytoplasmic. Residues S5 and S18 each carry the phosphoserine modification. One can recognise a v-SNARE coiled-coil homology domain in the interval 12–72 (RVRNLQSEVE…QKVARKFWWK (61 aa)). T28, T48, and T54 each carry phosphothreonine. S55 carries the phosphoserine modification. (Microbial infection) N6-stearoyl lysine attachment occurs at residues K64 and K68. The chain crosses the membrane as a helical; Anchor for type IV membrane protein span at residues 76-96 (MIVLICVIVFIIILFIVLFAT). The Vesicular portion of the chain corresponds to 97–100 (GAFS).

Belongs to the synaptobrevin family. Forms a SNARE complex composed of VAMP8, SNAP29 and STX17 involved in fusion of autophagosome with lysosome. Found in a number of SNARE complexes with NAPA, SNAP23, SNAP25, STX1A, STX4, STX7, STX8 and VTI1B. Interacts with PICALM. SNARE complex formation and binding by PICALM are mutually exclusive processes for VAMP8. Interacts with SBF2/MTMR13. Interacts with RAB21 (in GTP-bound form) in response to starvation; the interaction probably regulates VAMP8 endolysosomal trafficking. Interacts with STX17; this interaction is increased in the absence of TMEM39A. Interacts with TRIM6. As to quaternary structure, (Microbial infection) The interaction with STX17 is decreased in presence of SARS coronavirus-2/SARS-CoV-2 ORF3A protein. Post-translationally, (Microbial infection) Stearoylated By S.flexneri N-epsilon-fatty acyltransferase IcsB, thereby disrupting the host actin cytoskeleton. Platelets.

It localises to the lysosome membrane. The protein resides in the early endosome membrane. It is found in the late endosome membrane. Its subcellular location is the cell membrane. The protein localises to the zymogen granule membrane. Functionally, SNAREs, soluble N-ethylmaleimide-sensitive factor-attachment protein receptors, are essential proteins for fusion of cellular membranes. SNAREs localized on opposing membranes assemble to form a trans-SNARE complex, an extended, parallel four alpha-helical bundle that drives membrane fusion. VAMP8 is a SNARE involved in autophagy through the direct control of autophagosome membrane fusion with the lysososome membrane via its interaction with the STX17-SNAP29 binary t-SNARE complex. Also required for dense-granule secretion in platelets. Also plays a role in regulated enzyme secretion in pancreatic acinar cells. Involved in the abscission of the midbody during cell division, which leads to completely separate daughter cells. Involved in the homotypic fusion of early and late endosomes. Also participates in the activation of type I interferon antiviral response through a TRIM6-dependent mechanism. The polypeptide is Vesicle-associated membrane protein 8 (Homo sapiens (Human)).